A 907-amino-acid chain; its full sequence is Chloride channel protein 2 (907 aa).

The Cytoplasmic portion of the chain corresponds to 1 to 93; sequence MAAATAAAAT…RCHKFLVSRV (93 aa). Residues 22–40 form an essential for channel gating by both voltage and cell volume region; that stretch reads QYEQTLMYGRYTQELGAFA. Residue Thr26 is modified to Phosphothreonine. The tract at residues 42–55 is modulates channel gating by both voltage and cell volume; that stretch reads EEAARIRLGGPEPW. 2 consecutive transmembrane segments (helical) span residues 94-127 and 136-161; these read GEDW…AQQW and ILLQ…TQIL. Residues 167–171 carry the Selectivity filter part_1 motif; it reads GSGIP. The segment at residues 170 to 177 is an intramembrane region (helical); the sequence is IPEMKTIL. Helical transmembrane passes span 186–204 and 211–229; these read LTLK…ALGS and EGPF…SKFL. The Selectivity filter part_2 signature appears at 209 to 213; that stretch reads GKEGP. 2 consecutive intramembrane regions (helical) follow at residues 245 to 257 and 261 to 269; these read MLAA…VGCC and PIGGVLFSI. Transmembrane regions (helical) follow at residues 281-301, 327-355, 364-383, 435-455, and 463-486; these read YWRG…LAVW, LPAF…VQVM, FLMK…ISTL, ANVF…SALA, and GAFM…MAAW. The Selectivity filter part_3 motif lies at 463–467; that stretch reads GAFMP. The helical intramembrane region spans 503-517; that stretch reads GGYAVVGAAALAGAV. The note=Loop between two helices intramembrane region spans 518-519; the sequence is TH. Residues 520–531 constitute an intramembrane region (helical); that stretch reads TVSTAVIVFELT. The segment at residues 532-536 is an intramembrane region (note=Loop between two helices); that stretch reads GQIAH. Residues 537 to 554 form a helical membrane-spanning segment; it reads ILPVMIAVILANAVAQSL. Over 555 to 907 the chain is Cytoplasmic; it reads QPSLYDSIIR…TPSDSDDKCQ (353 aa). The CBS 1 domain maps to 590-648; the sequence is MVRDVPHVALSCTFRDLRLALHRTKGRMLALVESPESMILLGSIERSQVVALLGAQLSP. Basic residues predominate over residues 650–660; the sequence is RRRQHMQKLRK. Positions 650 to 720 are disordered; the sequence is RRRQHMQKLR…NATSLQEGTT (71 aa). Positions 664–678 are enriched in low complexity; it reads SPPSDQESPPSSETS. Positions 696 to 705 are enriched in basic residues; sequence QTHKPLKPAL. Over residues 710–720 the composition is skewed to polar residues; sequence SNATSLQEGTT. Phosphoserine is present on Ser767. In terms of domain architecture, CBS 2 spans 799-859; the sequence is IDPAPFQLVE…GSVTAQGVKV (61 aa). The Basolateral membrane sorting motif lies at 821–822; that stretch reads LL. A disordered region spans residues 865–907; the sequence is SFRDSATSSSDTETTEVHALWGPRSRHGLPREGTPSDSDDKCQ.

It belongs to the chloride channel (TC 2.A.49) family. ClC-2/CLCN2 subfamily. Homodimer. Interacts with auxiliary subunit HEPACAM. Post-translationally, phosphorylated. Activated by dephosphorylation. Ubiquitously expressed. Expressed in neurons and glial cells (at protein level).

It is found in the cell membrane. The protein resides in the basolateral cell membrane. Its subcellular location is the cell projection. It localises to the dendritic spine membrane. The protein localises to the axon. The enzyme catalyses chloride(in) = chloride(out). It catalyses the reaction thiocyanate(in) = thiocyanate(out). The catalysed reaction is bromide(in) = bromide(out). It carries out the reaction nitrate(in) = nitrate(out). The enzyme catalyses iodide(out) = iodide(in). Common gate kinetics are down-regulated by intracellular ATP. Inhibited by AK-42, a derivative of meclofenamate. Inhibited by Cd(2+). Inhibited by Zn(2+) and PKC activation. Inhibited at acidic pH. CCLN2:HEPACAM channel conductance is up-regulated upon hypo-osmolarity. Its function is as follows. Voltage-gated and osmosensitive chloride channel. Forms a homodimeric channel where each subunit has its own ion conduction pathway. Conducts double-barreled currents controlled by two types of gates, two fast glutamate gates that control each subunit independently and a slow common gate that opens and shuts off both subunits simultaneously. Displays inward rectification currents activated upon membrane hyperpolarization and extracellular hypotonicity. Contributes to chloride conductance involved in neuron excitability. In hippocampal neurons, generates a significant part of resting membrane conductance and provides an additional chloride efflux pathway to prevent chloride accumulation in dendrites upon GABA receptor activation. In glia, associates with the auxiliary subunit HEPACAM/GlialCAM at astrocytic processes and myelinated fiber tracts where it may regulate transcellular chloride flux buffering extracellular chloride and potassium concentrations. Regulates aldosterone production in adrenal glands. The opening of CLCN2 channels at hyperpolarized membrane potentials in the glomerulosa causes cell membrane depolarization, activation of voltage-gated calcium channels and increased expression of aldosterone synthase, the rate-limiting enzyme for aldosterone biosynthesis. Contributes to chloride conductance in retinal pigment epithelium involved in phagocytosis of shed photoreceptor outer segments and photoreceptor renewal. Conducts chloride currents at the basolateral membrane of epithelial cells with a role in chloride reabsorption rather than secretion. Permeable to small monovalent anions with chloride &gt; thiocyanate &gt; bromide &gt; nitrate &gt; iodide ion selectivity. The chain is Chloride channel protein 2 (Clcn2) from Rattus norvegicus (Rat).